The primary structure comprises 262 residues: Ubiquitin thioesterase otubain-like (262 aa).

Residues 64–262 enclose the OTU domain; that stretch reads KFIRRTRPDG…PGHYDILYPN (199 aa). Asp-72 is an active-site residue. Residue Cys-75 is the Nucleophile of the active site. Substrate is bound at residue Ile-168. His-255 is a catalytic residue.

The protein belongs to the peptidase C65 family.

The enzyme catalyses Thiol-dependent hydrolysis of ester, thioester, amide, peptide and isopeptide bonds formed by the C-terminal Gly of ubiquitin (a 76-residue protein attached to proteins as an intracellular targeting signal).. Functionally, possible hydrolase that can remove conjugated ubiquitin from proteins in vitro and may therefore play an important regulatory role at the level of protein turnover by preventing degradation. The chain is Ubiquitin thioesterase otubain-like from Drosophila melanogaster (Fruit fly).